The following is a 329-amino-acid chain: GMP reductase (329 aa).

Cys-178 serves as the catalytic Thioimidate intermediate. 207–230 (VIADGGIRTHGDIAKSIRMGATMV) contacts NADP(+).

This sequence belongs to the IMPDH/GMPR family. GuaC type 2 subfamily.

The catalysed reaction is IMP + NH4(+) + NADP(+) = GMP + NADPH + 2 H(+). Catalyzes the irreversible NADPH-dependent deamination of GMP to IMP. It functions in the conversion of nucleobase, nucleoside and nucleotide derivatives of G to A nucleotides, and in maintaining the intracellular balance of A and G nucleotides. The protein is GMP reductase of Lactococcus lactis subsp. lactis (strain IL1403) (Streptococcus lactis).